We begin with the raw amino-acid sequence, 414 residues long: Small ribosomal subunit protein mS46 (414 aa).

A compositionally biased stretch (polar residues) spans 20–35; it reads LNAQQQQRPFSSTTTR. 2 disordered regions span residues 20-71 and 168-229; these read LNAQ…EAAV and AGPG…DAPP. Low complexity-rich tracts occupy residues 45–59 and 168–200; these read PAAA…APGP and AGPG…PFGA. Over residues 205 to 224 the composition is skewed to basic and acidic residues; sequence PAGDKKRSGGSGDKRPRGDD.

The protein belongs to the mitochondrion-specific ribosomal protein mS46 family. As to quaternary structure, component of the mitochondrial small ribosomal subunit (mt-SSU). Mature N.crassa 74S mitochondrial ribosomes consist of a small (37S) and a large (54S) subunit. The 37S small subunit contains a 16S ribosomal RNA (16S mt-rRNA) and 32 different proteins. The 54S large subunit contains a 23S rRNA (23S mt-rRNA) and 42 different proteins.

It localises to the mitochondrion. Its function is as follows. Component of the mitochondrial ribosome (mitoribosome), a dedicated translation machinery responsible for the synthesis of mitochondrial genome-encoded proteins, including at least some of the essential transmembrane subunits of the mitochondrial respiratory chain. The mitoribosomes are attached to the mitochondrial inner membrane and translation products are cotranslationally integrated into the membrane. The polypeptide is Small ribosomal subunit protein mS46 (rsm28) (Neurospora crassa (strain ATCC 24698 / 74-OR23-1A / CBS 708.71 / DSM 1257 / FGSC 987)).